The primary structure comprises 208 residues: V-type ATP synthase subunit E (208 aa).

It belongs to the V-ATPase E subunit family.

Its function is as follows. Produces ATP from ADP in the presence of a proton gradient across the membrane. The protein is V-type ATP synthase subunit E of Chlamydia felis (strain Fe/C-56) (Chlamydophila felis).